Consider the following 204-residue polypeptide: Potassium-transporting ATPase KdpC subunit (204 aa).

The helical transmembrane segment at 21-41 (AALVIFVGLSLVTGVLYPVVV) threads the bilayer.

It belongs to the KdpC family. As to quaternary structure, the system is composed of three essential subunits: KdpA, KdpB and KdpC.

It localises to the cell inner membrane. In terms of biological role, part of the high-affinity ATP-driven potassium transport (or Kdp) system, which catalyzes the hydrolysis of ATP coupled with the electrogenic transport of potassium into the cytoplasm. This subunit acts as a catalytic chaperone that increases the ATP-binding affinity of the ATP-hydrolyzing subunit KdpB by the formation of a transient KdpB/KdpC/ATP ternary complex. The protein is Potassium-transporting ATPase KdpC subunit of Ralstonia nicotianae (strain ATCC BAA-1114 / GMI1000) (Ralstonia solanacearum).